The primary structure comprises 670 residues: NADH-ubiquinone oxidoreductase chain 5 (670 aa).

15 helical membrane passes run 3 to 23 (LLIV…GRFL), 36 to 56 (VSFS…GASA), 76 to 96 (FLFD…SSLV), 113 to 133 (FMCY…GDNF), 136 to 156 (LFLG…FWFT), 178 to 198 (LALG…STIF), 218 to 238 (ITLI…QIGL), 250 to 270 (TPVS…FMIA), 283 to 303 (LIVI…TGIL), 319 to 339 (LGYM…FHLM), 340 to 360 (NHAF…HAMS), 375 to 395 (FPLT…FPFL), 425 to 445 (VSVL…FLVP), 461 to 481 (IPMA…GYLA), and 618 to 638 (SGSV…FVTF).

It belongs to the complex I subunit 5 family.

Its subcellular location is the mitochondrion inner membrane. The enzyme catalyses a ubiquinone + NADH + 5 H(+)(in) = a ubiquinol + NAD(+) + 4 H(+)(out). In terms of biological role, core subunit of the mitochondrial membrane respiratory chain NADH dehydrogenase (Complex I) that is believed to belong to the minimal assembly required for catalysis. Complex I functions in the transfer of electrons from NADH to the respiratory chain. The immediate electron acceptor for the enzyme is believed to be ubiquinone. In Triticum aestivum (Wheat), this protein is NADH-ubiquinone oxidoreductase chain 5 (ND5).